Here is a 284-residue protein sequence, read N- to C-terminus: Phosphatidylglycerol--prolipoprotein diacylglyceryl transferase (284 aa).

The next 7 helical transmembrane spans lie at 19-39 (ISFYWYGMMYVLSFIFAMWFL), 60-80 (LLYLNFLGVVIGGRIGYVLFY), 98-118 (GGMSFHGGLIGVIISIMWFSY), 130-150 (FIVPAVPVGLGLGRLGNFING), 199-219 (QLYEMILEGIVLFVVIYIFSC), 225-245 (GSISGLFLLLYGLFRIIIEFF), and 258-278 (FITLGQVLSFPMVIFGFIIMY). Arg-143 contributes to the a 1,2-diacyl-sn-glycero-3-phospho-(1'-sn-glycerol) binding site.

This sequence belongs to the Lgt family.

The protein resides in the cell inner membrane. It carries out the reaction L-cysteinyl-[prolipoprotein] + a 1,2-diacyl-sn-glycero-3-phospho-(1'-sn-glycerol) = an S-1,2-diacyl-sn-glyceryl-L-cysteinyl-[prolipoprotein] + sn-glycerol 1-phosphate + H(+). The protein operates within protein modification; lipoprotein biosynthesis (diacylglyceryl transfer). Its function is as follows. Catalyzes the transfer of the diacylglyceryl group from phosphatidylglycerol to the sulfhydryl group of the N-terminal cysteine of a prolipoprotein, the first step in the formation of mature lipoproteins. The protein is Phosphatidylglycerol--prolipoprotein diacylglyceryl transferase of Blochmanniella floridana.